The following is a 247-amino-acid chain: 2,3-bisphosphoglycerate-dependent phosphoglycerate mutase (247 aa).

Substrate is bound by residues 8 to 15 (RHGESQWN), 21 to 22 (TG), R60, 87 to 90 (ERHY), K98, 114 to 115 (RR), and 183 to 184 (GN). The active-site Tele-phosphohistidine intermediate is the H9. The active-site Proton donor/acceptor is E87.

It belongs to the phosphoglycerate mutase family. BPG-dependent PGAM subfamily.

It catalyses the reaction (2R)-2-phosphoglycerate = (2R)-3-phosphoglycerate. Its pathway is carbohydrate degradation; glycolysis; pyruvate from D-glyceraldehyde 3-phosphate: step 3/5. Catalyzes the interconversion of 2-phosphoglycerate and 3-phosphoglycerate. This chain is 2,3-bisphosphoglycerate-dependent phosphoglycerate mutase, found in Chlorobium chlorochromatii (strain CaD3).